The sequence spans 699 residues: Elongation factor G 1 (699 aa).

Positions 8–290 (ERYRNIGICA…AVIEYLPSPI (283 aa)) constitute a tr-type G domain. GTP contacts are provided by residues 17–24 (AHVDAGKT), 88–92 (DTPGH), and 142–145 (NKMD).

This sequence belongs to the TRAFAC class translation factor GTPase superfamily. Classic translation factor GTPase family. EF-G/EF-2 subfamily.

The protein resides in the cytoplasm. Catalyzes the GTP-dependent ribosomal translocation step during translation elongation. During this step, the ribosome changes from the pre-translocational (PRE) to the post-translocational (POST) state as the newly formed A-site-bound peptidyl-tRNA and P-site-bound deacylated tRNA move to the P and E sites, respectively. Catalyzes the coordinated movement of the two tRNA molecules, the mRNA and conformational changes in the ribosome. This Vibrio vulnificus (strain YJ016) protein is Elongation factor G 1.